Consider the following 312-residue polypeptide: Ribosomal protein L11 methyltransferase (312 aa).

Positions 162, 183, 205, and 248 each coordinate S-adenosyl-L-methionine.

Belongs to the methyltransferase superfamily. PrmA family.

It localises to the cytoplasm. The catalysed reaction is L-lysyl-[protein] + 3 S-adenosyl-L-methionine = N(6),N(6),N(6)-trimethyl-L-lysyl-[protein] + 3 S-adenosyl-L-homocysteine + 3 H(+). Its function is as follows. Methylates ribosomal protein L11. The polypeptide is Ribosomal protein L11 methyltransferase (Geobacillus kaustophilus (strain HTA426)).